The primary structure comprises 544 residues: Chaperonin GroEL (544 aa).

Residues 29–32 (TLGP), 86–90 (DGTTT), Gly-413, 476–478 (NAA), and Asp-492 each bind ATP.

The protein belongs to the chaperonin (HSP60) family. In terms of assembly, forms a cylinder of 14 subunits composed of two heptameric rings stacked back-to-back. Interacts with the co-chaperonin GroES.

It is found in the cytoplasm. The catalysed reaction is ATP + H2O + a folded polypeptide = ADP + phosphate + an unfolded polypeptide.. Together with its co-chaperonin GroES, plays an essential role in assisting protein folding. The GroEL-GroES system forms a nano-cage that allows encapsulation of the non-native substrate proteins and provides a physical environment optimized to promote and accelerate protein folding. This chain is Chaperonin GroEL, found in Bacillus cereus (strain B4264).